The chain runs to 198 residues: Transcription factor FapR (198 aa).

Residues 102 to 167 (TRIARGHHLF…HGRTIVEVNS (66 aa)) enclose the MaoC-like domain.

This sequence belongs to the FapR family.

Its function is as follows. Transcriptional factor involved in regulation of membrane lipid biosynthesis by repressing genes involved in fatty acid and phospholipid metabolism. The polypeptide is Transcription factor FapR (Geobacillus kaustophilus (strain HTA426)).